The primary structure comprises 448 residues: Deoxyguanosinetriphosphate triphosphohydrolase-like protein (448 aa).

A disordered region spans residues 1–26; the sequence is MQINSSWQERFLADPPREKDHRPPFR. Over residues 11-26 the composition is skewed to basic and acidic residues; that stretch reads FLADPPREKDHRPPFR. An HD domain is found at 59 to 272; it reads RLTHSLEVAQ…MELADDIAYA (214 aa).

Belongs to the dGTPase family. Type 2 subfamily.

The polypeptide is Deoxyguanosinetriphosphate triphosphohydrolase-like protein (Histophilus somni (strain 129Pt) (Haemophilus somnus)).